The following is a 188-amino-acid chain: ATP-dependent Clp protease proteolytic subunit 1 (188 aa).

The Nucleophile role is filled by serine 90. Histidine 115 is an active-site residue.

It belongs to the peptidase S14 family. As to quaternary structure, fourteen ClpP subunits assemble into 2 heptameric rings which stack back to back to give a disk-like structure with a central cavity, resembling the structure of eukaryotic proteasomes.

Its subcellular location is the cytoplasm. The enzyme catalyses Hydrolysis of proteins to small peptides in the presence of ATP and magnesium. alpha-casein is the usual test substrate. In the absence of ATP, only oligopeptides shorter than five residues are hydrolyzed (such as succinyl-Leu-Tyr-|-NHMec, and Leu-Tyr-Leu-|-Tyr-Trp, in which cleavage of the -Tyr-|-Leu- and -Tyr-|-Trp bonds also occurs).. In terms of biological role, cleaves peptides in various proteins in a process that requires ATP hydrolysis. Has a chymotrypsin-like activity. Plays a major role in the degradation of misfolded proteins. The protein is ATP-dependent Clp protease proteolytic subunit 1 of Corynebacterium jeikeium (strain K411).